A 339-amino-acid chain; its full sequence is MSNLTPSIAVIGAGSWGTSLAILLAGKGYPVRLWGHNKEHIDRLISDGENSRYLPGISLPESLYPTPSLEKAVLGAQLVLMVVPSHVFRTVFRDLIPFLPIDCQIVSAVKGIENSTLSTMHMVMAQELAAYPALALIELGVISGPSFAKEVAQKQPTAVTVGFASADTAKKVQDIFSTDYFRVYTSTDIDGLEISGAFKNVMAIAAGISDGLSYGSNARAALITRGLAEMQRLGAAMNADPATFAGLSGLGDLLLTCTGDLSRNRNVGLQLGKGHSIEHIESEMFMVAEGVKTTKSFYDLARKLDVETPILDEVYHIIYEGKDCSQAVQDLLGRKLKPE.

Residues Ser-15, Trp-16, His-36, and Lys-110 each coordinate NADPH. Sn-glycerol 3-phosphate is bound by residues Lys-110, Gly-144, and Ser-146. NADPH is bound at residue Ala-148. Lys-199, Asp-252, Ser-262, Arg-263, and Asn-264 together coordinate sn-glycerol 3-phosphate. Catalysis depends on Lys-199, which acts as the Proton acceptor. Residue Arg-263 coordinates NADPH. NADPH is bound by residues Val-287 and Glu-289.

It belongs to the NAD-dependent glycerol-3-phosphate dehydrogenase family.

The protein localises to the cytoplasm. It catalyses the reaction sn-glycerol 3-phosphate + NAD(+) = dihydroxyacetone phosphate + NADH + H(+). The enzyme catalyses sn-glycerol 3-phosphate + NADP(+) = dihydroxyacetone phosphate + NADPH + H(+). The protein operates within membrane lipid metabolism; glycerophospholipid metabolism. Its function is as follows. Catalyzes the reduction of the glycolytic intermediate dihydroxyacetone phosphate (DHAP) to sn-glycerol 3-phosphate (G3P), the key precursor for phospholipid synthesis. The chain is Glycerol-3-phosphate dehydrogenase [NAD(P)+] from Desulfotalea psychrophila (strain LSv54 / DSM 12343).